The chain runs to 354 residues: Holliday junction branch migration complex subunit RuvB (354 aa).

Residues 1–22 (MTLQTDDFAPAPARRVVSAAPA) are disordered. Positions 5–194 (TDDFAPAPAR…FGIVARLEFY (190 aa)) are large ATPase domain (RuvB-L). Residues 9 to 22 (APAPARRVVSAAPA) show a composition bias toward low complexity. Residues leucine 33, arginine 34, glycine 75, lysine 78, threonine 79, threonine 80, 141-143 (EDY), arginine 184, tyrosine 194, and arginine 231 each bind ATP. A Mg(2+)-binding site is contributed by threonine 79. Residues 195–265 (SAQELARIVK…IAERALAMLD (71 aa)) are small ATPAse domain (RuvB-S). The interval 268–354 (PEGLDVMDRK…GAQAPGLFAV (87 aa)) is head domain (RuvB-H). The DNA site is built by arginine 323 and arginine 328.

It belongs to the RuvB family. In terms of assembly, homohexamer. Forms an RuvA(8)-RuvB(12)-Holliday junction (HJ) complex. HJ DNA is sandwiched between 2 RuvA tetramers; dsDNA enters through RuvA and exits via RuvB. An RuvB hexamer assembles on each DNA strand where it exits the tetramer. Each RuvB hexamer is contacted by two RuvA subunits (via domain III) on 2 adjacent RuvB subunits; this complex drives branch migration. In the full resolvosome a probable DNA-RuvA(4)-RuvB(12)-RuvC(2) complex forms which resolves the HJ.

It localises to the cytoplasm. The catalysed reaction is ATP + H2O = ADP + phosphate + H(+). The RuvA-RuvB-RuvC complex processes Holliday junction (HJ) DNA during genetic recombination and DNA repair, while the RuvA-RuvB complex plays an important role in the rescue of blocked DNA replication forks via replication fork reversal (RFR). RuvA specifically binds to HJ cruciform DNA, conferring on it an open structure. The RuvB hexamer acts as an ATP-dependent pump, pulling dsDNA into and through the RuvAB complex. RuvB forms 2 homohexamers on either side of HJ DNA bound by 1 or 2 RuvA tetramers; 4 subunits per hexamer contact DNA at a time. Coordinated motions by a converter formed by DNA-disengaged RuvB subunits stimulates ATP hydrolysis and nucleotide exchange. Immobilization of the converter enables RuvB to convert the ATP-contained energy into a lever motion, pulling 2 nucleotides of DNA out of the RuvA tetramer per ATP hydrolyzed, thus driving DNA branch migration. The RuvB motors rotate together with the DNA substrate, which together with the progressing nucleotide cycle form the mechanistic basis for DNA recombination by continuous HJ branch migration. Branch migration allows RuvC to scan DNA until it finds its consensus sequence, where it cleaves and resolves cruciform DNA. This Verminephrobacter eiseniae (strain EF01-2) protein is Holliday junction branch migration complex subunit RuvB.